The chain runs to 396 residues: 1-deoxy-D-xylulose 5-phosphate reductoisomerase (396 aa).

5 residues coordinate NADPH: T13, G14, S15, I16, and N127. Residue K128 coordinates 1-deoxy-D-xylulose 5-phosphate. E129 is a binding site for NADPH. D153 is a binding site for Mn(2+). The 1-deoxy-D-xylulose 5-phosphate site is built by S154, E155, S184, and H207. A Mn(2+)-binding site is contributed by E155. Residue G213 coordinates NADPH. 1-deoxy-D-xylulose 5-phosphate-binding residues include S220, N225, K226, and E229. E229 contributes to the Mn(2+) binding site.

This sequence belongs to the DXR family. It depends on Mg(2+) as a cofactor. The cofactor is Mn(2+).

It carries out the reaction 2-C-methyl-D-erythritol 4-phosphate + NADP(+) = 1-deoxy-D-xylulose 5-phosphate + NADPH + H(+). Its pathway is isoprenoid biosynthesis; isopentenyl diphosphate biosynthesis via DXP pathway; isopentenyl diphosphate from 1-deoxy-D-xylulose 5-phosphate: step 1/6. Its function is as follows. Catalyzes the NADPH-dependent rearrangement and reduction of 1-deoxy-D-xylulose-5-phosphate (DXP) to 2-C-methyl-D-erythritol 4-phosphate (MEP). This Pseudomonas aeruginosa (strain UCBPP-PA14) protein is 1-deoxy-D-xylulose 5-phosphate reductoisomerase.